Here is a 290-residue protein sequence, read N- to C-terminus: Multiple sugar-binding transport system permease protein MsmF (290 aa).

The next 7 membrane-spanning stretches (helical) occupy residues 12–32 (GWTF…FPMF), 72–92 (FTLV…IIIA), 104–124 (FFRA…SLIF), 156–176 (VIAS…ILFL), 201–221 (FWSV…IMAL), 231–253 (IFAL…VYNY), and 260–280 (YGYA…VSVL). In terms of domain architecture, ABC transmembrane type-1 spans 70-281 (IGFTLVLTLA…IIIGIVSVLQ (212 aa)).

The protein belongs to the binding-protein-dependent transport system permease family. MalFG subfamily.

It localises to the cell membrane. Its function is as follows. Involved in a binding protein-dependent transport system responsible for the uptake of melibiose, raffinose and isomaltotriose. This Streptococcus mutans serotype c (strain ATCC 700610 / UA159) protein is Multiple sugar-binding transport system permease protein MsmF (msmF).